A 563-amino-acid chain; its full sequence is MRLDLASLMSAPKSLGSAFKSWRLDKAPSPQHTFPSTSIPGMAFALLASVPPVFGLYTSFFPVLIYSLLGTGRHLSTGTFAILSLMTGSAVERLVPEPLVGNLSGIEKEQLDAQRVGVAAAVAFGSGALMLGMFVLQLGVLSTFLSEPVVKALTSGAALHVLLSQLPSLLGLSLPRQIGCFSLFKTLASLLTALPRSSPAELTISALSLALLVPVKELNVRFRDRLPTPIPGEVVLVLLASVLCFTSSVDTRYQVQIVGLLPGGFPQPLLPNLAELPRILADSLPIALVSFAVSASLASIHADKYSYTIDSNQEFLAHGASNLISSLFSCFPNSATLATTNLLVDAGGKTQLAGLFSCTVVLSVLLWLGPFFYYLPKAVLACINISSMRQVFCQMQELPQLWHISRVDFLLQVPGLCILSYPTPLYFGTRGQFRCNLEWHLGLGEGEKETSKPDGPMVAVAEPVRVVVLDFSGVTFADAAGAREVVQVRERLASRCRDARIRLLLAQCNALVQGTLTRVGLLDRVTPDQLFVSVQDAAAYALGSLLRGSSTRSGSQEALGCGK.

5 helical membrane-spanning segments follow: residues 45–65 (ALLA…PVLI), 75–91 (LSTG…GSAV), 116–136 (VGVA…MFVL), 152–172 (ALTS…LLGL), and 352–372 (LAGL…GPFF). The STAS domain maps to 406–541 (RVDFLLQVPG…VSVQDAAAYA (136 aa)).

The protein belongs to the SLC26A/SulP transporter (TC 2.A.53) family.

The protein localises to the membrane. Chloride/bicarbonate exchanger. This Homo sapiens (Human) protein is Putative solute carrier family 26 member 10P (SLC26A10P).